A 370-amino-acid chain; its full sequence is Actin-related protein 2/3 complex subunit 1A (370 aa).

WD repeat units follow at residues 6-45, 50-89, 140-179, 202-241, 244-284, and 322-365; these read FLLE…WTKA, EHNG…WKPT, PIRS…VDEK, GTGG…QVST, TEFL…TFVS, and LHQN…SSIQ.

This sequence belongs to the WD repeat ARPC1 family. In terms of assembly, probable component of the Arp2/3 complex in which it may replace ARPC1B.

It is found in the cytoplasm. It localises to the cytoskeleton. Its subcellular location is the nucleus. In terms of biological role, probably functions as a component of the Arp2/3 complex which is involved in regulation of actin polymerization and together with an activating nucleation-promoting factor (NPF) mediates the formation of branched actin networks. In addition to its role in the cytoplasmic cytoskeleton, the Arp2/3 complex also promotes actin polymerization in the nucleus, thereby regulating gene transcription and repair of damaged DNA. The polypeptide is Actin-related protein 2/3 complex subunit 1A (Arpc1a) (Rattus norvegicus (Rat)).